The sequence spans 387 residues: Deoxyguanosinetriphosphate triphosphohydrolase-like protein (387 aa).

The HD domain occupies 78 to 209 (RLTHSLEVAQ…ANLADEVAYN (132 aa)).

It belongs to the dGTPase family. Type 2 subfamily.

The sequence is that of Deoxyguanosinetriphosphate triphosphohydrolase-like protein from Ralstonia nicotianae (strain ATCC BAA-1114 / GMI1000) (Ralstonia solanacearum).